A 446-amino-acid chain; its full sequence is Vacuolar cation/proton exchanger 4 (446 aa).

The span at 1-16 (MSSISTESSSNLSLLE) shows a compositional bias: low complexity. A disordered region spans residues 1–33 (MSSISTESSSNLSLLENGGGGSDKPTAETSRRV). At 1–69 (MSSISTESSS…MRRILTNLQE (69 aa)) the chain is on the cytoplasmic side. A helical membrane pass occupies residues 70–90 (VLLGTKLFILFPAVPLAVVAH). Residues 91–96 (RYDCPR) are Extracellular-facing. A helical transmembrane segment spans residues 97 to 117 (AWVFALSLLGLTPLAERISFL). Over 118-128 (TEQIAFHTGPT) the chain is Cytoplasmic. A helical membrane pass occupies residues 129–149 (VGGLMNATCGNATEMIIAILA). The tract at residues 138 to 173 (GNATEMIIAILAVGQRKMRIVKLSLLGSILSNLLFV) is cation selection. Residues 150–162 (VGQRKMRIVKLSL) are Extracellular-facing. The helical transmembrane segment at 163–183 (LGSILSNLLFVLGTSLFLGGI) threads the bilayer. Over 184-196 (SNLRKHQSFDPRQ) the chain is Cytoplasmic. The helical transmembrane segment at 197-217 (GDMNSMLLYLALLCQTLPMIM) threads the bilayer. The Extracellular portion of the chain corresponds to 218–238 (RFTMEAEEYDGSDVVVLSRAS). A helical transmembrane segment spans residues 239-259 (SFVMLIAYLAFLIFHLFSSHL). Topologically, residues 260-285 (SPPPPPLPQREDVHDDDVSDKEEEGA) are cytoplasmic. Residues 286–306 (VIGMWSAIFWLIIMTLLVALL) form a helical membrane-spanning segment. Residues 307-319 (SDYLVSTIQDAAD) lie on the Extracellular side of the membrane. A helical membrane pass occupies residues 320–340 (SWGLSVGFIGIILLPIVGNAA). The interval 337-372 (GNAAEHAGAVIFAFRNKLDITLGIALGSATQIALFV) is cation selection. The Cytoplasmic portion of the chain corresponds to 341 to 359 (EHAGAVIFAFRNKLDITLG). Residues 360-380 (IALGSATQIALFVVPVTVLVA) form a helical membrane-spanning segment. The Extracellular portion of the chain corresponds to 381–388 (WTMGIEMD). A helical transmembrane segment spans residues 389–409 (LNFNLLETACFALSILVTSLV). At 410–416 (LQDGTSN) the chain is on the cytoplasmic side. The chain crosses the membrane as a helical span at residues 417 to 437 (YMKGLVLLLCYVVIAACFFVS). At 438–446 (NSPSSKLLF) the chain is on the extracellular side.

The protein belongs to the Ca(2+):cation antiporter (CaCA) (TC 2.A.19) family. Cation/proton exchanger (CAX) subfamily. In terms of tissue distribution, expressed at low levels in all tissues.

It is found in the vacuole membrane. Vacuolar cation/proton exchanger (CAX). Translocates Ca(2+) and other metal ions into vacuoles using the proton gradient formed by H(+)-ATPase and H(+)-pyrophosphatase. Cation selectivity transport in tobacco root tonoplast vesicles is Cd(2+)&gt;Zn(2+)&gt;&gt;Ca(2+)&gt;&gt;&gt;Mn(2+). In Arabidopsis thaliana (Mouse-ear cress), this protein is Vacuolar cation/proton exchanger 4 (CAX4).